We begin with the raw amino-acid sequence, 318 residues long: Methionyl-tRNA formyltransferase (318 aa).

Residue 110-113 coordinates (6S)-5,6,7,8-tetrahydrofolate; that stretch reads SLLP.

Belongs to the Fmt family.

It catalyses the reaction L-methionyl-tRNA(fMet) + (6R)-10-formyltetrahydrofolate = N-formyl-L-methionyl-tRNA(fMet) + (6S)-5,6,7,8-tetrahydrofolate + H(+). Functionally, attaches a formyl group to the free amino group of methionyl-tRNA(fMet). The formyl group appears to play a dual role in the initiator identity of N-formylmethionyl-tRNA by promoting its recognition by IF2 and preventing the misappropriation of this tRNA by the elongation apparatus. This chain is Methionyl-tRNA formyltransferase, found in Latilactobacillus sakei subsp. sakei (strain 23K) (Lactobacillus sakei subsp. sakei).